Consider the following 217-residue polypeptide: Small ribosomal subunit protein uS3c (217 aa).

The region spanning 39–109 (IRSCIEKQLH…QIRINLIEIT (71 aa)) is the KH type-2 domain.

It belongs to the universal ribosomal protein uS3 family. In terms of assembly, part of the 30S ribosomal subunit.

Its subcellular location is the plastid. The protein resides in the chloroplast. This Gracilaria tenuistipitata var. liui (Red alga) protein is Small ribosomal subunit protein uS3c (rps3).